The sequence spans 484 residues: Trigger factor (484 aa).

In terms of domain architecture, PPIase FKBP-type spans 162–243; sequence GDFISIDLSA…VKSVKERELP (82 aa). A disordered region spans residues 427 to 484; sequence DGNTIDTSEFFGKPPENDVTDLLDDDADGDAGVDADGDTENSAEPADADSADTAQGAG. Over residues 444-476 the composition is skewed to acidic residues; that stretch reads DVTDLLDDDADGDAGVDADGDTENSAEPADADS.

It belongs to the FKBP-type PPIase family. Tig subfamily.

The protein resides in the cytoplasm. The enzyme catalyses [protein]-peptidylproline (omega=180) = [protein]-peptidylproline (omega=0). Its function is as follows. Involved in protein export. Acts as a chaperone by maintaining the newly synthesized protein in an open conformation. Functions as a peptidyl-prolyl cis-trans isomerase. The protein is Trigger factor of Mycobacterium ulcerans (strain Agy99).